The sequence spans 278 residues: S-formylglutathione hydrolase YeiG (278 aa).

Active-site charge relay system residues include Ser-145, Asp-223, and His-256.

This sequence belongs to the esterase D family.

It carries out the reaction S-formylglutathione + H2O = formate + glutathione + H(+). Its function is as follows. Serine hydrolase involved in the detoxification of formaldehyde. Hydrolyzes S-formylglutathione to glutathione and formate. This chain is S-formylglutathione hydrolase YeiG (yeiG), found in Escherichia coli (strain SMS-3-5 / SECEC).